The primary structure comprises 230 residues: ATP synthase subunit a (230 aa).

Helical transmembrane passes span 16–36 (LVLFIPMTLTAVFLNLSWLSI), 73–93 (WVSAFTAIFILIFSINVLGLL), 106–126 (TYSIGVPLWMSVNILGFYLAF), 142–162 (LIPFMVIIETISLFAQPIALG), 165–185 (LAANLTAGHLLIFLLSTAIWT), and 192–212 (IASITLLIFFFLFLLEIGVAC).

This sequence belongs to the ATPase A chain family. In terms of assembly, F-type ATPases have 2 components, CF(1) - the catalytic core - and CF(0) - the membrane proton channel. CF(1) has five subunits: alpha(3), beta(3), gamma(1), delta(1), epsilon(1). CF(0) has three main subunits: a, b and c.

It localises to the mitochondrion inner membrane. In terms of biological role, mitochondrial membrane ATP synthase (F(1)F(0) ATP synthase or Complex V) produces ATP from ADP in the presence of a proton gradient across the membrane which is generated by electron transport complexes of the respiratory chain. F-type ATPases consist of two structural domains, F(1) - containing the extramembraneous catalytic core and F(0) - containing the membrane proton channel, linked together by a central stalk and a peripheral stalk. During catalysis, ATP synthesis in the catalytic domain of F(1) is coupled via a rotary mechanism of the central stalk subunits to proton translocation. Key component of the proton channel; it may play a direct role in the translocation of protons across the membrane. In Patiria pectinifera (Starfish), this protein is ATP synthase subunit a (ATP6).